The chain runs to 232 residues: Ribonuclease 3 (232 aa).

The RNase III domain occupies 2–135 (IKALEDDLSQ…FIGALYLDQG (134 aa)). Mg(2+) is bound at residue Glu48. Asp52 is a catalytic residue. Residues Asp121 and Glu124 each contribute to the Mg(2+) site. Glu124 is an active-site residue. The region spanning 161–230 (DHKSELQELL…ANQALQLLRR (70 aa)) is the DRBM domain.

Belongs to the ribonuclease III family. Homodimer. Mg(2+) serves as cofactor.

The protein localises to the cytoplasm. The catalysed reaction is Endonucleolytic cleavage to 5'-phosphomonoester.. Functionally, digests double-stranded RNA. Involved in the processing of primary rRNA transcript to yield the immediate precursors to the large and small rRNAs (23S and 16S). Processes some mRNAs, and tRNAs when they are encoded in the rRNA operon. Processes pre-crRNA and tracrRNA of type II CRISPR loci if present in the organism. The protein is Ribonuclease 3 of Pediococcus pentosaceus (strain ATCC 25745 / CCUG 21536 / LMG 10740 / 183-1w).